We begin with the raw amino-acid sequence, 457 residues long: MGLIVSIFNIGCAIGGIVLSKVGDIYGRRIGLITVTAIYVVGILIQITSINKWYQYFIGRIISGIGVGGIAVLSPMLISEVAPKHIRGTLVQLYQLMGTMGIFLGYCTNYGTKNYHNATQWRVGLGLCFAWATFMVSGMMFVPESPRYLIEVGKDEEAKHSLSKSNKVSVDDPALLAEYDTIKAGIEIEKLAGNASWSELLSTKTKVFQRVLMGVIIQSLQQLTGDNYFFYYGTTIFKSVGLKDSFQTSIIIGVVNFFSSFIAVYTIERFGRRTCLLWGAASMLCCFAVFASVGVTKLWPQGSSHQDITSQGAGNCMIVFTMFFIFSFATTWAGGCFVIVSETFPLRAKSRGMAIATAANWMWGFLISFFTPFITGAINFYYGYVFLGCLVFAYFYVFFFVPETKGLTLEEVNTMWLEGVPAWKSASWVPPERRTADYDADAIDHDNRPIYKRFFSS.

Residues 1–2 lie on the Cytoplasmic side of the membrane; the sequence is MG. A helical membrane pass occupies residues 3-23; sequence LIVSIFNIGCAIGGIVLSKVG. At 24-29 the chain is on the extracellular side; sequence DIYGRR. Residues 30 to 50 form a helical membrane-spanning segment; it reads IGLITVTAIYVVGILIQITSI. The Cytoplasmic segment spans residues 51-60; that stretch reads NKWYQYFIGR. Residues 61–81 form a helical membrane-spanning segment; the sequence is IISGIGVGGIAVLSPMLISEV. At 82 to 87 the chain is on the extracellular side; it reads APKHIR. The helical transmembrane segment at 88 to 108 threads the bilayer; sequence GTLVQLYQLMGTMGIFLGYCT. The Cytoplasmic segment spans residues 109–122; sequence NYGTKNYHNATQWR. The helical transmembrane segment at 123 to 143 threads the bilayer; that stretch reads VGLGLCFAWATFMVSGMMFVP. Topologically, residues 144 to 247 are extracellular; the sequence is ESPRYLIEVG…KSVGLKDSFQ (104 aa). Residue asparagine 194 is glycosylated (N-linked (GlcNAc...) asparagine). The helical transmembrane segment at 248–268 threads the bilayer; that stretch reads TSIIIGVVNFFSSFIAVYTIE. At 269 to 274 the chain is on the cytoplasmic side; sequence RFGRRT. The chain crosses the membrane as a helical span at residues 275–295; that stretch reads CLLWGAASMLCCFAVFASVGV. Over 296–319 the chain is Extracellular; sequence TKLWPQGSSHQDITSQGAGNCMIV. Residues 320–340 traverse the membrane as a helical segment; it reads FTMFFIFSFATTWAGGCFVIV. The Cytoplasmic portion of the chain corresponds to 341–353; the sequence is SETFPLRAKSRGM. Residues 354–374 traverse the membrane as a helical segment; that stretch reads AIATAANWMWGFLISFFTPFI. Residues 375–379 lie on the Extracellular side of the membrane; the sequence is TGAIN. Residues 380–400 form a helical membrane-spanning segment; that stretch reads FYYGYVFLGCLVFAYFYVFFF. The Cytoplasmic segment spans residues 401 to 457; it reads VPETKGLTLEEVNTMWLEGVPAWKSASWVPPERRTADYDADAIDHDNRPIYKRFFSS.

This sequence belongs to the major facilitator superfamily. Sugar transporter (TC 2.A.1.1) family.

Its subcellular location is the membrane. In terms of biological role, probable glucose transporter. In Saccharomyces cerevisiae (strain ATCC 204508 / S288c) (Baker's yeast), this protein is Putative hexose transporter 12 (HXT12).